The chain runs to 212 residues: Large ribosomal subunit protein uL3 (212 aa).

Residues 134 to 154 (RKTHGNSVSHRVPGSIGQNQT) are disordered. The residue at position 153 (Gln153) is an N5-methylglutamine.

This sequence belongs to the universal ribosomal protein uL3 family. As to quaternary structure, part of the 50S ribosomal subunit. Forms a cluster with proteins L14 and L19. In terms of processing, methylated by PrmB.

One of the primary rRNA binding proteins, it binds directly near the 3'-end of the 23S rRNA, where it nucleates assembly of the 50S subunit. This Dichelobacter nodosus (strain VCS1703A) protein is Large ribosomal subunit protein uL3.